The chain runs to 272 residues: NH(3)-dependent NAD(+) synthetase (272 aa).

Position 45–52 (45–52 (GISGGQDS)) interacts with ATP. Asp51 is a binding site for Mg(2+). Arg138 provides a ligand contact to deamido-NAD(+). Thr158 is an ATP binding site. Glu163 contacts Mg(2+). Residues Lys171 and Asp178 each contribute to the deamido-NAD(+) site. The ATP site is built by Lys187 and Thr209. 258–259 (HK) is a binding site for deamido-NAD(+).

The protein belongs to the NAD synthetase family. Homodimer.

The catalysed reaction is deamido-NAD(+) + NH4(+) + ATP = AMP + diphosphate + NAD(+) + H(+). Its pathway is cofactor biosynthesis; NAD(+) biosynthesis; NAD(+) from deamido-NAD(+) (ammonia route): step 1/1. Catalyzes the ATP-dependent amidation of deamido-NAD to form NAD. Uses ammonia as a nitrogen source. In Bacillus cereus (strain G9842), this protein is NH(3)-dependent NAD(+) synthetase.